A 369-amino-acid chain; its full sequence is Phospho-N-acetylmuramoyl-pentapeptide-transferase (369 aa).

10 consecutive transmembrane segments (helical) span residues 2–22 (IPLL…TQLF), 55–75 (AVVI…SWWI), 82–102 (PSVS…VGFL), 120–140 (AKLI…INFA), 163–183 (LAFA…NLII), 196–216 (LDGL…LIGI), 240–260 (PLDL…FLWW), 267–287 (IFMG…FAIL), 292–312 (ILLA…ILQV), and 349–369 (ILGG…WVVF).

The protein belongs to the glycosyltransferase 4 family. MraY subfamily. It depends on Mg(2+) as a cofactor.

It localises to the cell membrane. It carries out the reaction UDP-N-acetyl-alpha-D-muramoyl-L-alanyl-gamma-D-glutamyl-meso-2,6-diaminopimeloyl-D-alanyl-D-alanine + di-trans,octa-cis-undecaprenyl phosphate = di-trans,octa-cis-undecaprenyl diphospho-N-acetyl-alpha-D-muramoyl-L-alanyl-D-glutamyl-meso-2,6-diaminopimeloyl-D-alanyl-D-alanine + UMP. It participates in cell wall biogenesis; peptidoglycan biosynthesis. Its function is as follows. Catalyzes the initial step of the lipid cycle reactions in the biosynthesis of the cell wall peptidoglycan: transfers peptidoglycan precursor phospho-MurNAc-pentapeptide from UDP-MurNAc-pentapeptide onto the lipid carrier undecaprenyl phosphate, yielding undecaprenyl-pyrophosphoryl-MurNAc-pentapeptide, known as lipid I. The sequence is that of Phospho-N-acetylmuramoyl-pentapeptide-transferase from Renibacterium salmoninarum (strain ATCC 33209 / DSM 20767 / JCM 11484 / NBRC 15589 / NCIMB 2235).